A 433-amino-acid polypeptide reads, in one-letter code: Tyrosine--tRNA ligase (433 aa).

Tyrosine 34 contributes to the L-tyrosine binding site. Residues 39 to 48 (PTASSLHVGS) carry the 'HIGH' region motif. L-tyrosine-binding residues include tyrosine 169 and glutamine 173. A 'KMSKS' region motif is present at residues 229–233 (KMGKT). ATP is bound at residue lysine 232. The S4 RNA-binding domain occupies 364–432 (IPAFVLFHTV…RYHTIVVRKG (69 aa)).

Belongs to the class-I aminoacyl-tRNA synthetase family. TyrS type 1 subfamily. In terms of assembly, homodimer.

The protein resides in the cytoplasm. The enzyme catalyses tRNA(Tyr) + L-tyrosine + ATP = L-tyrosyl-tRNA(Tyr) + AMP + diphosphate + H(+). Its function is as follows. Catalyzes the attachment of tyrosine to tRNA(Tyr) in a two-step reaction: tyrosine is first activated by ATP to form Tyr-AMP and then transferred to the acceptor end of tRNA(Tyr). This chain is Tyrosine--tRNA ligase, found in Desulfosudis oleivorans (strain DSM 6200 / JCM 39069 / Hxd3) (Desulfococcus oleovorans).